A 145-amino-acid chain; its full sequence is MKLMGLDVGSRTVGVAVSDALGWTAQGVEIIRINEDEEQFGLDRVGELIASHDVQGFVVGLPKNMNNSLGPRAEASKRYGDMLTARFNLPVDFEDERLTTVEAERMLVEQADTSRRKRKQVIDKLAAGLILQNYLDRHGKLTREK.

This sequence belongs to the YqgF nuclease family.

The protein resides in the cytoplasm. Its function is as follows. Could be a nuclease involved in processing of the 5'-end of pre-16S rRNA. This Levilactobacillus brevis (strain ATCC 367 / BCRC 12310 / CIP 105137 / JCM 1170 / LMG 11437 / NCIMB 947 / NCTC 947) (Lactobacillus brevis) protein is Putative pre-16S rRNA nuclease.